We begin with the raw amino-acid sequence, 311 residues long: Tryptophan 2,3-dioxygenase (311 aa).

The tract at residues 1 to 37 is disordered; that stretch reads MQPPGGDAPAGCPFSGARAAQPAQAAHEAPHVPGEAD. The span at 17–27 shows a compositional bias: low complexity; that stretch reads ARAAQPAQAAH. Substrate-binding positions include 80-84, Tyr142, and Arg146; that span reads FIIQH. Position 269 (His269) interacts with heme. Substrate is bound at residue Thr283.

Belongs to the tryptophan 2,3-dioxygenase family. In terms of assembly, homotetramer. Heme serves as cofactor.

The catalysed reaction is L-tryptophan + O2 = N-formyl-L-kynurenine. The protein operates within amino-acid degradation; L-tryptophan degradation via kynurenine pathway; L-kynurenine from L-tryptophan: step 1/2. Functionally, heme-dependent dioxygenase that catalyzes the oxidative cleavage of the L-tryptophan (L-Trp) pyrrole ring and converts L-tryptophan to N-formyl-L-kynurenine. Catalyzes the oxidative cleavage of the indole moiety. This Burkholderia cenocepacia (strain ATCC BAA-245 / DSM 16553 / LMG 16656 / NCTC 13227 / J2315 / CF5610) (Burkholderia cepacia (strain J2315)) protein is Tryptophan 2,3-dioxygenase.